We begin with the raw amino-acid sequence, 509 residues long: Aspartyl/glutamyl-tRNA(Asn/Gln) amidotransferase subunit B (509 aa).

Belongs to the GatB/GatE family. GatB subfamily. Heterotrimer of A, B and C subunits.

The catalysed reaction is L-glutamyl-tRNA(Gln) + L-glutamine + ATP + H2O = L-glutaminyl-tRNA(Gln) + L-glutamate + ADP + phosphate + H(+). It carries out the reaction L-aspartyl-tRNA(Asn) + L-glutamine + ATP + H2O = L-asparaginyl-tRNA(Asn) + L-glutamate + ADP + phosphate + 2 H(+). Allows the formation of correctly charged Asn-tRNA(Asn) or Gln-tRNA(Gln) through the transamidation of misacylated Asp-tRNA(Asn) or Glu-tRNA(Gln) in organisms which lack either or both of asparaginyl-tRNA or glutaminyl-tRNA synthetases. The reaction takes place in the presence of glutamine and ATP through an activated phospho-Asp-tRNA(Asn) or phospho-Glu-tRNA(Gln). The chain is Aspartyl/glutamyl-tRNA(Asn/Gln) amidotransferase subunit B from Mycobacterium leprae (strain Br4923).